The following is a 172-amino-acid chain: MDKVLNREESMELMDLLGLDRSAWGNIPVMRKAYLKKCKELHPDKGGDEDKMKRMNFLYKKMEQGVKVAHQPDFGTWNSSEVGCDFPPNSDTLYCKEWPNCATNPSVHCPCLMCMLKLRHRNRKFLRSSPLVWIDCYCFDCFRQWFGCDLTQEALHCWEKVLGDTPYRDLKL.

Position 1 is an N-acetylmethionine; by host (Met-1). The J domain occupies 12–75; the sequence is ELMDLLGLDR…VKVAHQPDFG (64 aa). Residues 101-114 form a C4-type; atypical zinc finger; the sequence is CATNPSVHCPCLMC. An H1C3-type; atypical zinc finger spans residues 120–141; the sequence is HRNRKFLRSSPLVWIDCYCFDC.

Interacts with host PPP2R1A; the interaction inhibits PP2A activity. Interacts with agnoprotein; this interaction prevents agnoprotein dephosphorylation by host PP2A. Interacts with host RBL1 and RBL2. Interacts with SMARCA5. Interacts with SDHB.

It is found in the host cytoplasm. The protein localises to the host nucleus. Functionally, promotes efficient viral genome replication by modulating several host signaling pathways including transport network, interferon production or cell cycle progression. Inhibits host PP2A phosphatase activity and thereby prevents agnoprotein dephosphorylation. Inactivation of PP2A also results in the transactivation of cyclin A and cyclin D1 promoters. In addition, antagonizes the RIGI-mediated IFN response through interaction with E3 ligase TRIM25 leading to the inhibition of 'Lys-63'-linked ubiquitination of RIGI. Inhibits nucleotide excision repair (NER) pathway which leads to DNA strand breaks during DNA replication and micronuclei formation. The chain is Small t antigen from JC polyomavirus (JCPyV).